The chain runs to 256 residues: Thiazole synthase (256 aa).

Lysine 95 (schiff-base intermediate with DXP) is an active-site residue. Residues glycine 156, 182 to 183 (AG), and 204 to 205 (NT) each bind 1-deoxy-D-xylulose 5-phosphate.

Belongs to the ThiG family. As to quaternary structure, homotetramer. Forms heterodimers with either ThiH or ThiS.

It is found in the cytoplasm. It carries out the reaction [ThiS sulfur-carrier protein]-C-terminal-Gly-aminoethanethioate + 2-iminoacetate + 1-deoxy-D-xylulose 5-phosphate = [ThiS sulfur-carrier protein]-C-terminal Gly-Gly + 2-[(2R,5Z)-2-carboxy-4-methylthiazol-5(2H)-ylidene]ethyl phosphate + 2 H2O + H(+). Its pathway is cofactor biosynthesis; thiamine diphosphate biosynthesis. In terms of biological role, catalyzes the rearrangement of 1-deoxy-D-xylulose 5-phosphate (DXP) to produce the thiazole phosphate moiety of thiamine. Sulfur is provided by the thiocarboxylate moiety of the carrier protein ThiS. In vitro, sulfur can be provided by H(2)S. The chain is Thiazole synthase from Salmonella agona (strain SL483).